Consider the following 202-residue polypeptide: Glycerol-3-phosphate acyltransferase (202 aa).

A run of 6 helical transmembrane segments spans residues 2-22 (MIIVMLLLSYLIGAFPSGFVI), 54-74 (FLVTFLDIFKGFITVFFPLWL), 85-105 (FFTNGLIVGLFAILGHVYPVY), 120-140 (VVLGVNPILLLILAIIFFIVL), 141-161 (KIFKYVSLASIVAAICCVIGS), and 162-182 (LIIQDYILLVVSFLVSIILII).

It belongs to the PlsY family. Probably interacts with PlsX.

The protein localises to the cell membrane. The catalysed reaction is an acyl phosphate + sn-glycerol 3-phosphate = a 1-acyl-sn-glycero-3-phosphate + phosphate. The protein operates within lipid metabolism; phospholipid metabolism. Its function is as follows. Catalyzes the transfer of an acyl group from acyl-phosphate (acyl-PO(4)) to glycerol-3-phosphate (G3P) to form lysophosphatidic acid (LPA). This enzyme utilizes acyl-phosphate as fatty acyl donor, but not acyl-CoA or acyl-ACP. In Staphylococcus aureus (strain Mu3 / ATCC 700698), this protein is Glycerol-3-phosphate acyltransferase.